The primary structure comprises 366 residues: Glucose 1-dehydrogenase 2 (366 aa).

Cysteine 39 lines the Zn(2+) pocket. Serine 41 lines the substrate pocket. Zn(2+) is bound by residues histidine 66 and glutamate 67. Asparagine 90, glutamate 116, glutamine 152, and aspartate 156 together coordinate substrate. Residue glutamine 152 coordinates Zn(2+). Residues asparagine 212 to arginine 214, phenylalanine 277 to phenylalanine 279, leucine 305 to asparagine 307, and lysine 354 each bind NADP(+). Position 307 (asparagine 307) interacts with substrate.

It belongs to the zinc-containing alcohol dehydrogenase family. Glucose 1-dehydrogenase subfamily. The cofactor is Zn(2+).

The enzyme catalyses D-glucose + NAD(+) = D-glucono-1,5-lactone + NADH + H(+). It catalyses the reaction D-glucose + NADP(+) = D-glucono-1,5-lactone + NADPH + H(+). Functionally, catalyzes the NAD(P)(+)-dependent oxidation of D-glucose to D-gluconate via gluconolactone. Can utilize both NAD(+) and NADP(+) as electron acceptor. Is involved in the degradation of glucose through a non-phosphorylative variant of the Entner-Doudoroff pathway. This chain is Glucose 1-dehydrogenase 2, found in Caldivirga maquilingensis (strain ATCC 700844 / DSM 13496 / JCM 10307 / IC-167).